Consider the following 107-residue polypeptide: RecQ-mediated genome instability protein 2 homolog (107 aa).

This sequence belongs to the RMI2 family. As to quaternary structure, component of the RMI complex, containing at least top-3, rmh-1 and rmh-2. Component of the BTR double Holliday Junction dissolution complex composed of at least him-6, top-3, rmh-1 and rmif-2, which is involved in double strand break repair in the germline. Interacts with rmh-1; the interaction is direct and is required for mutual stability and localization at nuclear foci. As to expression, expressed in the germline.

The protein localises to the nucleus. Functionally, essential component of the RMI complex, a complex that plays an important role in the processing of homologous recombination intermediates. Component of the BTR double Holliday Junction dissolution complex, which is involved in homologous recombination during meiotic double strand break in the germline. Plays a role in double strand break repair by positively regulating the accumulation of rad-51 at double strand breaks. Stabilizes and positively regulates the localization of the BTR double Holliday Junction dissolution complex components rmh-1, him-6 and top-3 at nuclear foci during meiotic recombination. Positively regulates meiotic recombination, chiasma formation, and chromosome segregation in meiosis. Positively regulates DNA crossover formation and positioning on chromosome arms (away from the chromosome center) during homologous recombination. The polypeptide is RecQ-mediated genome instability protein 2 homolog (Caenorhabditis elegans).